The primary structure comprises 66 residues: Large ribosomal subunit protein bL35 (66 aa).

Basic residues predominate over residues 1–15 (MSKMKTKSGAKKRFK). The disordered stretch occupies residues 1–35 (MSKMKTKSGAKKRFKLTASGKVKAGQAGKRHGMIK).

The protein belongs to the bacterial ribosomal protein bL35 family.

The chain is Large ribosomal subunit protein bL35 from Maricaulis maris (strain MCS10) (Caulobacter maris).